The primary structure comprises 292 residues: Ephrin type-A receptor 4a (292 aa).

Residues 1–9 (IGIGEFGEV) and Lys27 each bind ATP. One can recognise a Protein kinase domain in the interval 1-265 (IGIGEFGEVC…QIVNMLDKLI (265 aa)). Asp120 (proton acceptor) is an active-site residue. Residue Tyr153 is modified to Phosphotyrosine; by autocatalysis.

It belongs to the protein kinase superfamily. Tyr protein kinase family. Ephrin receptor subfamily. In terms of tissue distribution, widely expressed in the developing nervous system.

It is found in the cell membrane. The protein localises to the early endosome. The catalysed reaction is L-tyrosyl-[protein] + ATP = O-phospho-L-tyrosyl-[protein] + ADP + H(+). Functionally, receptor tyrosine kinase which binds membrane-bound ephrin family ligands residing on adjacent cells, leading to contact-dependent bidirectional signaling into neighboring cells. The signaling pathway downstream of the receptor is referred to as forward signaling while the signaling pathway downstream of the ephrin ligand is referred to as reverse signaling. Highly promiscuous, it has the unique property among Eph receptors to bind and to be physiologically activated by both GPI-anchored ephrin-A and transmembrane ephrin-B ligands including efna1 and efnb3. Upon activation by ephrin ligands, modulates cell morphology and integrin-dependent cell adhesion through regulation of the Rac, Rap and Rho GTPases activity. Plays an important role in the development of the nervous system controlling different steps of axonal guidance including the establishment of the corticospinal projections. The polypeptide is Ephrin type-A receptor 4a (epha4a) (Danio rerio (Zebrafish)).